Reading from the N-terminus, the 335-residue chain is L-carnitine dehydrogenase (335 aa).

29-34 (GTGVIG) contacts NAD(+).

Belongs to the 3-hydroxyacyl-CoA dehydrogenase family. L-carnitine dehydrogenase subfamily. Homodimer.

It localises to the cytoplasm. The enzyme catalyses carnitine + NAD(+) = 3-dehydrocarnitine + NADH + H(+). The protein operates within amine and polyamine metabolism; carnitine metabolism. Functionally, catalyzes the NAD(+)-dependent oxidation of L-carnitine to 3-dehydrocarnitine. This chain is L-carnitine dehydrogenase, found in Streptomyces griseus subsp. griseus (strain JCM 4626 / CBS 651.72 / NBRC 13350 / KCC S-0626 / ISP 5235).